Reading from the N-terminus, the 85-residue chain is Putative membrane protein insertion efficiency factor (85 aa).

This sequence belongs to the UPF0161 family.

It localises to the cell inner membrane. Functionally, could be involved in insertion of integral membrane proteins into the membrane. The sequence is that of Putative membrane protein insertion efficiency factor from Sodalis glossinidius (strain morsitans).